Consider the following 282-residue polypeptide: 2-dehydro-3-deoxyphosphooctonate aldolase (282 aa).

Belongs to the KdsA family.

Its subcellular location is the cytoplasm. It catalyses the reaction D-arabinose 5-phosphate + phosphoenolpyruvate + H2O = 3-deoxy-alpha-D-manno-2-octulosonate-8-phosphate + phosphate. It participates in carbohydrate biosynthesis; 3-deoxy-D-manno-octulosonate biosynthesis; 3-deoxy-D-manno-octulosonate from D-ribulose 5-phosphate: step 2/3. The protein operates within bacterial outer membrane biogenesis; lipopolysaccharide biosynthesis. In Bartonella bacilliformis (strain ATCC 35685 / KC583 / Herrer 020/F12,63), this protein is 2-dehydro-3-deoxyphosphooctonate aldolase.